A 431-amino-acid chain; its full sequence is Trigger factor (431 aa).

Residues 160-245 (EDRVTIDFSG…LKKVEVMVLP (86 aa)) form the PPIase FKBP-type domain.

The protein belongs to the FKBP-type PPIase family. Tig subfamily.

The protein resides in the cytoplasm. The enzyme catalyses [protein]-peptidylproline (omega=180) = [protein]-peptidylproline (omega=0). In terms of biological role, involved in protein export. Acts as a chaperone by maintaining the newly synthesized protein in an open conformation. Functions as a peptidyl-prolyl cis-trans isomerase. This is Trigger factor from Actinobacillus succinogenes (strain ATCC 55618 / DSM 22257 / CCUG 43843 / 130Z).